A 910-amino-acid chain; its full sequence is von Willebrand factor A domain-containing protein DDB_G0292740 (910 aa).

The 132-residue stretch at 63–194 (AYQYYNVSSF…SITIHITMIS (132 aa)) folds into the VIT domain. The interval 297 to 318 (IKNNPHSDSDSDSDDEENKKEN) is disordered. The region spanning 346-515 (EFIFLIDCSG…DMETEVMKLL (170 aa)) is the VWFA domain. A compositionally biased stretch (low complexity) spans 703–719 (QYQQQQQQQQQNFNSGF). The segment at 703-815 (QYQQQQQQQQ…TQSESTPSND (113 aa)) is disordered. A compositionally biased stretch (pro residues) spans 720–749 (APPPPPMMSSGPPPPPGSSFGAPPPPPPGG). A compositionally biased stretch (low complexity) spans 750–802 (AFPTSSISEKKSSSQSSSSYLPPTMSLSRKSSLSPSSPSKNYPSPKLSSPSLS). Residues 803–815 (YGSTQSESTPSND) show a composition bias toward polar residues.

This chain is von Willebrand factor A domain-containing protein DDB_G0292740, found in Dictyostelium discoideum (Social amoeba).